The sequence spans 118 residues: Large ribosomal subunit protein uL18 (118 aa).

The disordered stretch occupies residues 1 to 22 (MISKPDKNKLRQKRHRRVRGKL). Basic residues predominate over residues 10-20 (LRQKRHRRVRG).

It belongs to the universal ribosomal protein uL18 family. In terms of assembly, part of the 50S ribosomal subunit; part of the 5S rRNA/L5/L18/L25 subcomplex. Contacts the 5S and 23S rRNAs.

In terms of biological role, this is one of the proteins that bind and probably mediate the attachment of the 5S RNA into the large ribosomal subunit, where it forms part of the central protuberance. The sequence is that of Large ribosomal subunit protein uL18 from Streptococcus thermophilus (strain ATCC BAA-491 / LMD-9).